We begin with the raw amino-acid sequence, 222 residues long: Interleukin-12 subunit alpha (222 aa).

Residues 1 to 25 form the signal peptide; the sequence is MCPLRNLLLVATLVLLNHLDHLSLG. 3 disulfides stabilise this stretch: C40–C113, C67–C199, and C88–C126. N42 and N96 each carry an N-linked (GlcNAc...) asparagine glycan.

This sequence belongs to the IL-6 superfamily. As to quaternary structure, heterodimer with IL12B; disulfide-linked. This heterodimer is known as interleukin IL-12. Heterodimer with EBI3/IL27B; not disulfide-linked. This heterodimer is known as interleukin IL-35. Interacts with NBR1; this interaction promotes IL-12 secretion.

It localises to the secreted. Its function is as follows. Heterodimerizes with IL12B to form the IL-12 cytokine or with EBI3/IL27B to form the IL-35 cytokine. IL-12 is primarily produced by professional antigen-presenting cells (APCs) such as B-cells and dendritic cells (DCs) as well as macrophages and granulocytes and regulates T-cell and natural killer-cell responses, induces the production of interferon-gamma (IFN-gamma), favors the differentiation of T-helper 1 (Th1) cells and is an important link between innate resistance and adaptive immunity. Mechanistically, exerts its biological effects through a receptor composed of IL12R1 and IL12R2 subunits. Binding to the receptor results in the rapid tyrosine phosphorylation of a number of cellular substrates including the JAK family kinases TYK2 and JAK2. In turn, recruited STAT4 gets phosphorylated and translocates to the nucleus where it regulates cytokine/growth factor responsive genes. As part of IL-35, plays essential roles in maintaining the immune homeostasis of the liver microenvironment and also functions as an immune-suppressive cytokine. Mediates biological events through unconventional receptors composed of IL12RB2 and gp130/IL6ST heterodimers or homodimers. Signaling requires the transcription factors STAT1 and STAT4, which form a unique heterodimer that binds to distinct DNA sites. This is Interleukin-12 subunit alpha (IL12A) from Sus scrofa (Pig).